Reading from the N-terminus, the 618-residue chain is Alpha-dioxygenase PIOX (618 aa).

The active-site Proton acceptor is His157. Asp158 provides a ligand contact to Ca(2+). Residue His162 coordinates heme b. Ca(2+)-binding residues include Thr210, Trp212, Asp214, and Ser216. His311 contacts hexadecanoate. Heme b-binding residues include His382, Arg479, and Arg483. Glu599 lines the hexadecanoate pocket.

Belongs to the peroxidase family. Heme b serves as cofactor. Ca(2+) is required as a cofactor.

It carries out the reaction a 1,2-saturated fatty acid + O2 = a (2R)-2-hydroperoxy fatty acid. The enzyme catalyses (9Z,12Z)-octadecadienoate + O2 = (2R,9Z,12Z)-2-hydroperoxyoctadecadienoate. It catalyses the reaction hexadecanoate + O2 = (2R)-2-hydroperoxyhexadecanoate. The catalysed reaction is (9Z,12Z,15Z)-octadecatrienoate + O2 = (R)-2-hydroperoxy-(9Z,12Z,15Z)-octadecatrienoate. It carries out the reaction tetradecanoate + O2 = (2R)-2-hydroperoxytetradecanoate. The enzyme catalyses octadecanoate + O2 = (2R)-2-hydroperoxyoctadecanoate. It catalyses the reaction (9Z)-octadecenoate + O2 = (2R,9Z)-2-hydroperoxyoctadecenoate. Functionally, alpha-dioxygenase that catalyzes the primary oxygenation step of a variety of 14-20 carbon fatty acids, containing up to three unsaturated bonds, into their corresponding 2R-hydroperoxides. Involved in the production of oxylipins that function in cell signaling, wound healing, and protection from infection. This chain is Alpha-dioxygenase PIOX, found in Oryza sativa subsp. japonica (Rice).